Reading from the N-terminus, the 74-residue chain is Protein RALF-like 25 (74 aa).

The signal sequence occupies residues 1–22; sequence MKTFMIILLVICSILIVGRVEA. Disulfide bonds link Cys35-Cys44 and Cys62-Cys68.

It belongs to the plant rapid alkalinization factor (RALF) family.

It localises to the secreted. Cell signaling peptide that may regulate plant stress, growth, and development. Mediates a rapid alkalinization of extracellular space by mediating a transient increase in the cytoplasmic Ca(2+) concentration leading to a calcium-dependent signaling events through a cell surface receptor and a concomitant activation of some intracellular mitogen-activated protein kinases. The polypeptide is Protein RALF-like 25 (RALFL25) (Arabidopsis thaliana (Mouse-ear cress)).